A 976-amino-acid polypeptide reads, in one-letter code: Villin-2 (976 aa).

Gelsolin-like repeat units lie at residues 27 to 77, 148 to 188, 260 to 302, 399 to 450, 531 to 571, and 633 to 674; these read FEAV…DEAG, IRLK…QERA, GKME…DERK, GKVK…EDQD, NKAV…EQLE, and FQVE…KEKQ. Residues 769-917 are disordered; it reads NSSSNRPAYS…SEIQPSGATF (149 aa). A compositionally biased stretch (basic and acidic residues) spans 782–794; the sequence is RLNESHDGPRQRA. Low complexity-rich tracts occupy residues 795 to 812, 823 to 841, and 848 to 858; these read EALA…SSTK, SQAS…VLVA, and DTSPTRRSTSS. Phosphoserine is present on serine 890. The span at 908–917 shows a compositional bias: polar residues; the sequence is SEIQPSGATF. One can recognise an HP domain in the interval 911 to 976; the sequence is QPSGATFTYE…DLLKKKFDLF (66 aa).

This sequence belongs to the villin/gelsolin family. As to expression, expressed in all tissues examined. Mainly detected in the root epidermis and vasculature. Expressed in the root cap.

The protein resides in the cytoplasm. The protein localises to the cytoskeleton. Ca(2+)-regulated actin-binding protein. Involved in actin filaments bundling. Caps the barbed end of actin filaments and is able to sever them in a calcium-dependent manner. Required for the construction of actin collars in pollen tubes. Acts redundantly with VLN5 (AC Q9LVC6) to generate thick actin filament bundles and to regulate polarized pollen tube growth. Acts redundantly with VLN3 (AC O81645) to regulate directional organ growth and in sclerenchyma development. The chain is Villin-2 from Arabidopsis thaliana (Mouse-ear cress).